The chain runs to 914 residues: Chitin synthase B (914 aa).

Disordered stretches follow at residues 1–67 and 112–140; these read MAYQ…TSGY and YARS…GGGL. The segment covering 130–140 has biased composition (gly residues); that stretch reads GGAGSGGGGGL. 7 consecutive transmembrane segments (helical) span residues 543–562, 586–606, 627–647, 662–682, 712–732, 843–863, and 882–902; these read WLNG…GRMY, ILTW…MDLV, IVNT…FILA, SFVV…YLVV, AGII…ASFM, LVTF…SDGV, and ALLW…CWFL.

The protein belongs to the chitin synthase family. Class III subfamily.

The protein localises to the cell membrane. The enzyme catalyses [(1-&gt;4)-N-acetyl-beta-D-glucosaminyl](n) + UDP-N-acetyl-alpha-D-glucosamine = [(1-&gt;4)-N-acetyl-beta-D-glucosaminyl](n+1) + UDP + H(+). Functionally, polymerizes chitin, a structural polymer of the cell wall and septum, by transferring the sugar moiety of UDP-GlcNAc to the non-reducing end of the growing chitin polymer. Plays an important role in septal growth or maintenance. Mediates colony spore formation. This is Chitin synthase B from Aspergillus niger (strain ATCC MYA-4892 / CBS 513.88 / FGSC A1513).